Reading from the N-terminus, the 126-residue chain is Phosphoribosyl-ATP pyrophosphatase (126 aa).

This sequence belongs to the PRA-PH family.

It is found in the cytoplasm. It catalyses the reaction 1-(5-phospho-beta-D-ribosyl)-ATP + H2O = 1-(5-phospho-beta-D-ribosyl)-5'-AMP + diphosphate + H(+). It functions in the pathway amino-acid biosynthesis; L-histidine biosynthesis; L-histidine from 5-phospho-alpha-D-ribose 1-diphosphate: step 2/9. The protein is Phosphoribosyl-ATP pyrophosphatase of Variovorax paradoxus (strain S110).